The chain runs to 691 residues: Amino-acid acetyltransferase, mitochondrial (691 aa).

Positions 1–27 (MSSTSLAWPRTAKSSLLQSADFSSTSK) are enriched in polar residues. 2 disordered regions span residues 1–29 (MSSTSLAWPRTAKSSLLQSADFSSTSKGY) and 65–95 (RLKAQHSPKPQVKEPEKESKDDAPQPLPSGV). Residues 75–87 (QVKEPEKESKDDA) are compositionally biased toward basic and acidic residues. An N-acetyltransferase domain is found at 512 to 681 (NRPRMSLDDP…YEAVCRSIQP (170 aa)).

This sequence belongs to the acetyltransferase family.

Its subcellular location is the mitochondrion. It catalyses the reaction L-glutamate + acetyl-CoA = N-acetyl-L-glutamate + CoA + H(+). It functions in the pathway amino-acid biosynthesis; L-arginine biosynthesis; N(2)-acetyl-L-ornithine from L-glutamate: step 1/4. Its function is as follows. N-acetylglutamate synthase involved in arginine biosynthesis. This chain is Amino-acid acetyltransferase, mitochondrial (arg2), found in Aspergillus terreus (strain NIH 2624 / FGSC A1156).